Consider the following 339-residue polypeptide: Replication factor C subunit 2 (339 aa).

48–55 (YGPPGTGK) is an ATP binding site.

This sequence belongs to the activator 1 small subunits family. In terms of assembly, heterotetramer of subunits RFC2, RFC3, RFC4 and RFC5 that can form a complex with RFC1. In terms of tissue distribution, expressed in roots, leaves, shoot apical meristem (SAM), flag leaves and panicles.

The protein localises to the nucleus. Functionally, may be involved in DNA replication and thus regulate cell proliferation. The protein is Replication factor C subunit 2 (RFC2) of Oryza sativa subsp. japonica (Rice).